A 290-amino-acid polypeptide reads, in one-letter code: Protoheme IX farnesyltransferase (290 aa).

A run of 9 helical transmembrane segments spans residues 8 to 28 (LTKP…YFLA), 36 to 56 (LSLL…GCVV), 81 to 101 (INIE…TGLL), 108 to 128 (LSAV…TMWY), 133 to 153 (VYGT…GYLA), 163 to 183 (VLLF…IAMF), 209 to 229 (IMIY…FGHT), 230 to 247 (GYEY…WFKV), and 270 to 290 (LAIT…SITF).

The protein belongs to the UbiA prenyltransferase family. Protoheme IX farnesyltransferase subfamily.

It is found in the cell inner membrane. The enzyme catalyses heme b + (2E,6E)-farnesyl diphosphate + H2O = Fe(II)-heme o + diphosphate. It participates in porphyrin-containing compound metabolism; heme O biosynthesis; heme O from protoheme: step 1/1. Converts heme B (protoheme IX) to heme O by substitution of the vinyl group on carbon 2 of heme B porphyrin ring with a hydroxyethyl farnesyl side group. The protein is Protoheme IX farnesyltransferase of Aliivibrio salmonicida (strain LFI1238) (Vibrio salmonicida (strain LFI1238)).